A 783-amino-acid polypeptide reads, in one-letter code: MTSQAIQLIDVNKEYNKESLEYFKQCVGTRDVGFNYHVISVFGSQSSGKSTLLNILFNTQFDTMDAQVKRQQTTKGIWLAHTQNVNNHKSTTDTDSDYFILDVEGSDGAERGEDQDFERKAALFAISVSEVLIVNMWEQQIGLYQGNNMGLLKTVFEVNLSLFGKRGNDHKVLLLFVIRDHVGVTPLKSLQESLITELEQIWSELNKPTGCEETTLYDFFDLEFKGLGHKLLQEEQFYDDVKSLGDSFIDSESNEYLLKPNYHHKLPIDGWNMYAEQCWEQIENNRDLDLPTQQILVARFKTEDIANEAYAKFTEEYETETEKRINDKTELVSYLKKIKDECLGEYDEHASRYAKAVYEEKRIELVDKVNERLFTTASKYLDMLTAVLLTKLENGMKEKENIKLPFEDRYLKLFKDIEAEFDAAITEFFSKDLLTKIKDFELKFAADVHEKKLQLRESELNALLSKIKKQLTLRIKDEEIELLSKPTPDLWDKVTDTFENIMKKTLSRFATGEGEYEFKMGLSEDENKKQYHAIRAFAWTLLETVVHDYLKEDTIVSLLRDRFESKFRYDSNDVPRLWKNEDEIDQSFRVAKEHALEILDILTLAVKTDGTEVIPDAFEDEPNEGLIYDDSHDVYHSNRFAHILNETQKEKVQQQFRRQINVTVLDCKRSIVTSSTHIPIWIYAVIVVLGWNEFMIVIRNPLFVTLALLSIVSFYFIQKFGLWGPVMNVVNTALGESRTTIKEKLRQFVLEEHELKKTAKVEEEIELQDLSKNSSSSGNEDSD.

Over 1–677 the chain is Cytoplasmic; the sequence is MTSQAIQLID…KRSIVTSSTH (677 aa). In terms of domain architecture, GB1/RHD3-type G spans 33–265; it reads GFNYHVISVF…YLLKPNYHHK (233 aa). 43 to 50 is a binding site for GTP; sequence GSQSSGKS. A coiled-coil region spans residues 449 to 472; it reads HEKKLQLRESELNALLSKIKKQLT. Residues 678–698 traverse the membrane as a helical segment; the sequence is IPIWIYAVIVVLGWNEFMIVI. The Lumenal segment spans residues 699-701; that stretch reads RNP. Residues 702-722 traverse the membrane as a helical segment; that stretch reads LFVTLALLSIVSFYFIQKFGL. At 723–783 the chain is on the cytoplasmic side; the sequence is WGPVMNVVNT…SSSSGNEDSD (61 aa).

This sequence belongs to the TRAFAC class dynamin-like GTPase superfamily. GB1/RHD3 GTPase family. RHD3 subfamily.

It localises to the endoplasmic reticulum membrane. Cooperates with the reticulon proteins and tubule-shaping DP1 family proteins to generate and maintain the structure of the tubular endoplasmic reticulum network. Has GTPase activity, which is required for its function in ER organization. The protein is Protein SEY1 of Candida glabrata (strain ATCC 2001 / BCRC 20586 / JCM 3761 / NBRC 0622 / NRRL Y-65 / CBS 138) (Yeast).